The chain runs to 427 residues: MINLTPWLNAPTWYVAFSGGLDSTVLLHLLAEYARNHASPPLRAIHIHHGLQAAADAWPAHCQAICDNFDVELQVIHVQVSPGASLEQAARDARYAAFRQVLGPGDILFTGQHRDDQAETLLFRLLRGAGLRGLAAMPGQRALGQGSLVRPLLACSRQHLQEYAQAQGLTWIEDPSNVDTQFARNYLRGEVMPHLQQRWPQASQNFARAAEHLGEALGLLDELAQEDLALAGKGAPLAWPGLDSLDLAALLALSPARQRNALQYWLSQRTRLPDTRHWAGWADLRDAGADARPVWRLADGRLVRSHGRIWWLSGDWLQQPAGSLAWPDPDGPLRLPGNGCVRLVGAAVPSGLRIAYRQGGEMLEVPGRGRRDLKRLLNEQQVPHFLRSRLPLLYHGECLLAVANLPGLVQADCQLHWQLPTNAQGLS.

Residue 18–23 (SGGLDS) coordinates ATP.

This sequence belongs to the tRNA(Ile)-lysidine synthase family.

The protein localises to the cytoplasm. It carries out the reaction cytidine(34) in tRNA(Ile2) + L-lysine + ATP = lysidine(34) in tRNA(Ile2) + AMP + diphosphate + H(+). Ligates lysine onto the cytidine present at position 34 of the AUA codon-specific tRNA(Ile) that contains the anticodon CAU, in an ATP-dependent manner. Cytidine is converted to lysidine, thus changing the amino acid specificity of the tRNA from methionine to isoleucine. The protein is tRNA(Ile)-lysidine synthase of Pseudomonas putida (strain ATCC 47054 / DSM 6125 / CFBP 8728 / NCIMB 11950 / KT2440).